The chain runs to 376 residues: 23S rRNA (uracil(747)-C(5))-methyltransferase RlmC (376 aa).

[4Fe-4S] cluster is bound by residues Cys-3, Cys-11, Cys-14, and Cys-87. Residues Gln-212, Phe-241, Glu-262, and Asn-307 each coordinate S-adenosyl-L-methionine. Cys-334 serves as the catalytic Nucleophile.

Belongs to the class I-like SAM-binding methyltransferase superfamily. RNA M5U methyltransferase family. RlmC subfamily.

The enzyme catalyses uridine(747) in 23S rRNA + S-adenosyl-L-methionine = 5-methyluridine(747) in 23S rRNA + S-adenosyl-L-homocysteine + H(+). In terms of biological role, catalyzes the formation of 5-methyl-uridine at position 747 (m5U747) in 23S rRNA. This Pectobacterium carotovorum subsp. carotovorum (strain PC1) protein is 23S rRNA (uracil(747)-C(5))-methyltransferase RlmC.